A 3166-amino-acid polypeptide reads, in one-letter code: Intermembrane lipid transfer protein VPS13A (3166 aa).

Residues 3-116 (FESVVVEVLN…LMETKQQELK (114 aa)) enclose the Chorein N-terminal domain. TPR repeat units lie at residues 212–245 (LFAYWNVNSEMFYLNDYDESLKALKNGIVNENIV) and 373–406 (LTSKKPSPEILMSLEELEKTLDVFNITIARQQAE). Threonine 831 bears the Phosphothreonine mark. Serine 835 is modified (phosphoserine). Positions 838–844 (EFFDAPC) match the FFAT motif. The span at 1343 to 1359 (APSSANKDPETMTSGVT) shows a compositional bias: polar residues. A disordered region spans residues 1343-1365 (APSSANKDPETMTSGVTSPPDHS). Serine 1410 bears the Phosphoserine mark. 2 TPR repeats span residues 1806 to 1840 (AIVESDSEAENYKVPEYKTAISFYSRDQLNITLSK) and 1999 to 2034 (ISVFEGDTLLGIASPENEFNIPLASYRSSLSLVPED). The 246-residue stretch at 2202-2447 (VAFHSPYWMV…VYYTWADPVG (246 aa)) folds into the SHR-BD domain. 2 required for mitochondrial localization regions span residues 2607–3166 (LQPH…SPRL) and 2743–3166 (EYEV…SPRL). 2 TPR repeats span residues 2716–2750 (ADLVTKAEVTEKTEVEHFHKDVEAFEQEYEVVSSV) and 2852–2890 (ILGLDVLGNPFGLIREFSEGVEAFFYEPYQGAIQGPEEF). The segment at 2945 to 3019 (PAGLREGITR…SSTFQGIKRA (75 aa)) is required for lipid droplet localization.

The protein belongs to the VPS13 family. In terms of assembly, interacts (via FFAT motif) with VAPA and VAPB. Interacts with RAB7A. Interacts with XK.

It localises to the mitochondrion outer membrane. It is found in the endoplasmic reticulum membrane. The protein resides in the endosome membrane. The protein localises to the lysosome membrane. Its subcellular location is the lipid droplet. It localises to the golgi apparatus. It is found in the cytoplasmic vesicle. The protein resides in the secretory vesicle. The protein localises to the neuronal dense core vesicle. In terms of biological role, mediates the transfer of lipids between membranes at organelle contact sites. Required for the formation or stabilization of ER-mitochondria contact sites which enable transfer of lipids between the ER and mitochondria. Negatively regulates lipid droplet size and motility. Required for efficient lysosomal protein degradation. The sequence is that of Intermembrane lipid transfer protein VPS13A from Mus musculus (Mouse).